We begin with the raw amino-acid sequence, 367 residues long: 2-aminoethylphosphonate--pyruvate transaminase (367 aa).

Lysine 194 carries the post-translational modification N6-(pyridoxal phosphate)lysine.

It belongs to the class-V pyridoxal-phosphate-dependent aminotransferase family. PhnW subfamily. In terms of assembly, homodimer. The cofactor is pyridoxal 5'-phosphate.

It carries out the reaction (2-aminoethyl)phosphonate + pyruvate = phosphonoacetaldehyde + L-alanine. Involved in phosphonate degradation. The protein is 2-aminoethylphosphonate--pyruvate transaminase of Salmonella dublin (strain CT_02021853).